A 154-amino-acid polypeptide reads, in one-letter code: Superoxide dismutase [Cu-Zn] (154 aa).

The Cu cation site is built by His47, His49, and His64. Cysteines 58 and 147 form a disulfide. Residues His64, His72, His81, and Asp84 each contribute to the Zn(2+) site. Residue His121 coordinates Cu cation. Position 144 (Arg144) interacts with substrate.

It belongs to the Cu-Zn superoxide dismutase family. Homodimer. Requires Cu cation as cofactor. Zn(2+) serves as cofactor.

It localises to the cytoplasm. The protein resides in the mitochondrion. Its subcellular location is the cell membrane. It carries out the reaction 2 superoxide + 2 H(+) = H2O2 + O2. Its function is as follows. Destroys radicals which are normally produced within the cells and which are toxic to biological systems. Destroys radicals produced by host defense mechanisms. The protein is Superoxide dismutase [Cu-Zn] of Cryptococcus neoformans var. grubii serotype A (strain H99 / ATCC 208821 / CBS 10515 / FGSC 9487) (Filobasidiella neoformans var. grubii).